The following is a 377-amino-acid chain: DNA replication and repair protein RecF (377 aa).

30-37 (GPNGVGKT) lines the ATP pocket.

The protein belongs to the RecF family.

The protein localises to the cytoplasm. Its function is as follows. The RecF protein is involved in DNA metabolism; it is required for DNA replication and normal SOS inducibility. RecF binds preferentially to single-stranded, linear DNA. It also seems to bind ATP. The protein is DNA replication and repair protein RecF of Salinispora tropica (strain ATCC BAA-916 / DSM 44818 / JCM 13857 / NBRC 105044 / CNB-440).